The chain runs to 102 residues: Large ribosomal subunit protein bL21 (102 aa).

This sequence belongs to the bacterial ribosomal protein bL21 family. As to quaternary structure, part of the 50S ribosomal subunit. Contacts protein L20.

In terms of biological role, this protein binds to 23S rRNA in the presence of protein L20. The sequence is that of Large ribosomal subunit protein bL21 from Shouchella clausii (strain KSM-K16) (Alkalihalobacillus clausii).